Here is a 145-residue protein sequence, read N- to C-terminus: D-aminoacyl-tRNA deacylase (145 aa).

Residues 137–138 (GP) carry the Gly-cisPro motif, important for rejection of L-amino acids motif.

This sequence belongs to the DTD family. Homodimer.

The protein resides in the cytoplasm. The catalysed reaction is glycyl-tRNA(Ala) + H2O = tRNA(Ala) + glycine + H(+). It carries out the reaction a D-aminoacyl-tRNA + H2O = a tRNA + a D-alpha-amino acid + H(+). An aminoacyl-tRNA editing enzyme that deacylates mischarged D-aminoacyl-tRNAs. Also deacylates mischarged glycyl-tRNA(Ala), protecting cells against glycine mischarging by AlaRS. Acts via tRNA-based rather than protein-based catalysis; rejects L-amino acids rather than detecting D-amino acids in the active site. By recycling D-aminoacyl-tRNA to D-amino acids and free tRNA molecules, this enzyme counteracts the toxicity associated with the formation of D-aminoacyl-tRNA entities in vivo and helps enforce protein L-homochirality. This chain is D-aminoacyl-tRNA deacylase, found in Saccharophagus degradans (strain 2-40 / ATCC 43961 / DSM 17024).